The chain runs to 134 residues: Profilin-2 (134 aa).

The cysteines at positions 13 and 118 are disulfide-linked. An Involved in PIP2 interaction motif is present at residues 84–100 (AVIRGKKGSGGITIKKT). Threonine 114 is modified (phosphothreonine).

It belongs to the profilin family. As to quaternary structure, occurs in many kinds of cells as a complex with monomeric actin in a 1:1 ratio. Post-translationally, phosphorylated by MAP kinases.

The protein localises to the cytoplasm. It localises to the cytoskeleton. In terms of biological role, binds to actin and affects the structure of the cytoskeleton. At high concentrations, profilin prevents the polymerization of actin, whereas it enhances it at low concentrations. The sequence is that of Profilin-2 from Olea europaea (Common olive).